The chain runs to 1206 residues: MRVTAANQHQYDTDLLETLAQRVMVGDGAMGTQLQDAELTLDDFRGLEGCNEILNETRPDVLETIHRRYFEAGADLVETNTFGCNLSNLGDYDIADKIRDLSQRGTVIARRVADELTTPDHKRYVLGSMGPGTKLPTLGHTEYRVVRDAYTESALGMLDGGADAVLVETCQDLLQLKAAVLGSRRAMTQAGRHIPVFVHVTVETTGTMLLGSEIGAALAAVEPLGVDMIGLNCATGPAEMSEHLRHLSKHARIPVSVMPNAGLPVLGAKGAEYPLQPDELAEALAGFIAEFGLSLVGGCCGTTPDHIREVAAAVARCNDGTVPRGERHVTYEPSVSSLYTAIPFAQKPSVLMIGERTNANGSKVFREAMIAEDYQKCLDIAKDQTRGGAHLLDLCVDYVGRNGVADMKALAGRLATVSTLPIMLDSTEIPVLQAGLEHLGGRCVINSVNYEDGDGPESRFVKTMELVAEHGAAVVALTIDEQGQARTVEKKVEVAERLINDITSNWGVDKSAILIDCLTFTIATGQEESRKDGIETIDAIRELKKRHPAVQTTLGLSNISFGLNPSARQVLNSVFLHECQEAGLDSAIVHASKILPINRIPEEQRQAALDLVYDRRREGYDPLQKLMWLFKGVSSPSSKETREAELAKLPLFDRLAQRIVDGERNGLDVDLDEAMTQKPPLAIINENLLDGMKTVGELFGSGQMQLPFVLQSAEVMKAAVAYLEPHMEKSDCDFGKGLAKGRIVLATVKGDVHDIGKNLVDIILSNNGYEVVNLGIKQPITNILEVAEDKSADVVGMSGLLVKSTVIMKENLEEMNTRGVAEKFPVLLGGAALTRSYVENDLAEVYEGEVHYARDAFEGLKLMDTIMSAKRGEALAPGSPESLAAEADRNKETERKARHERSKRIAVQRKAAEEPVEVPERSDVPSDVEVPAPPFWGSRIIKGLAVADYTGFLDERALFLGQWGLRGVRGGAGPSYEDLVQTEGRPRLRYWLDRLSTYGVLAYAAVVYGYFPAVSEDNDIVVLAEPRPDAEQRYRFTFPRQQRGRFLCIADFIRSRDLATERSEVDVLPFQLVTMGQPIADFVGELFVSNSYRDYLEVHGIGVQLTEALAEYWHRRIREELKFSGNRTMSADDPEAVEDYFKLGYRGARFAFGYGACPDLEDRIKMMELLQPERIGVTISEELQLHPEQSTDAFVLHHPAAKYFNV.

A Hcy-binding domain is found at 1-314; it reads MRVTAANQHQ…DHIREVAAAV (314 aa). Zn(2+)-binding residues include cysteine 233, cysteine 299, and cysteine 300. Residues 350–609 form the Pterin-binding domain; the sequence is VLMIGERTNA…IPEEQRQAAL (260 aa). Positions 642–735 constitute a B12-binding N-terminal domain; that stretch reads REAELAKLPL…HMEKSDCDFG (94 aa). The B12-binding domain occupies 740 to 877; the sequence is KGRIVLATVK…SAKRGEALAP (138 aa). Methylcob(III)alamin is bound by residues 750–754, histidine 753, serine 798, and alanine 856; that span reads GDVHD. A disordered region spans residues 873-925; it reads EALAPGSPESLAAEADRNKETERKARHERSKRIAVQRKAAEEPVEVPERSDVP. Over residues 886-897 the composition is skewed to basic and acidic residues; the sequence is EADRNKETERKA. Positions 898–907 are enriched in basic residues; the sequence is RHERSKRIAV. An AdoMet activation domain is found at 907 to 1206; sequence VQRKAAEEPV…HHPAAKYFNV (300 aa). Residues 910-924 show a composition bias toward basic and acidic residues; sequence KAAEEPVEVPERSDV. S-adenosyl-L-methionine-binding positions include aspartate 954, arginine 1149, and 1203 to 1204; that span reads YF.

Belongs to the vitamin-B12 dependent methionine synthase family. Methylcob(III)alamin serves as cofactor. Zn(2+) is required as a cofactor.

It catalyses the reaction (6S)-5-methyl-5,6,7,8-tetrahydrofolate + L-homocysteine = (6S)-5,6,7,8-tetrahydrofolate + L-methionine. Its pathway is amino-acid biosynthesis; L-methionine biosynthesis via de novo pathway; L-methionine from L-homocysteine (MetH route): step 1/1. Catalyzes the transfer of a methyl group from methyl-cobalamin to homocysteine, yielding enzyme-bound cob(I)alamin and methionine. Subsequently, remethylates the cofactor using methyltetrahydrofolate. The protein is Methionine synthase (metH) of Mycobacterium leprae (strain TN).